A 227-amino-acid chain; its full sequence is 7-cyano-7-deazaguanine synthase (227 aa).

F8–L18 is a binding site for ATP. Zn(2+) is bound by residues C187, C196, C199, and C202.

It belongs to the QueC family. It depends on Zn(2+) as a cofactor.

It catalyses the reaction 7-carboxy-7-deazaguanine + NH4(+) + ATP = 7-cyano-7-deazaguanine + ADP + phosphate + H2O + H(+). It participates in purine metabolism; 7-cyano-7-deazaguanine biosynthesis. In terms of biological role, catalyzes the ATP-dependent conversion of 7-carboxy-7-deazaguanine (CDG) to 7-cyano-7-deazaguanine (preQ(0)). In Aliivibrio fischeri (strain ATCC 700601 / ES114) (Vibrio fischeri), this protein is 7-cyano-7-deazaguanine synthase.